The following is a 190-amino-acid chain: Peptidyl-tRNA hydrolase (190 aa).

Y14 contacts tRNA. H19 functions as the Proton acceptor in the catalytic mechanism. The tRNA site is built by Y64, N66, and N112.

It belongs to the PTH family. Monomer.

The protein resides in the cytoplasm. The enzyme catalyses an N-acyl-L-alpha-aminoacyl-tRNA + H2O = an N-acyl-L-amino acid + a tRNA + H(+). In terms of biological role, hydrolyzes ribosome-free peptidyl-tRNAs (with 1 or more amino acids incorporated), which drop off the ribosome during protein synthesis, or as a result of ribosome stalling. Functionally, catalyzes the release of premature peptidyl moieties from peptidyl-tRNA molecules trapped in stalled 50S ribosomal subunits, and thus maintains levels of free tRNAs and 50S ribosomes. The protein is Peptidyl-tRNA hydrolase of Chlorobium phaeovibrioides (strain DSM 265 / 1930) (Prosthecochloris vibrioformis (strain DSM 265)).